The primary structure comprises 224 residues: Claudin-17 (224 aa).

Topologically, residues 1–7 (MAFYPLQ) are cytoplasmic. The helical transmembrane segment at 8 to 28 (IAGLVLGFLGMVGTLATTLLP) threads the bilayer. Over 29-81 (QWRVSAFVGSNIIVFERLWEGLWMNCIRQARVRLQCKFYSSLLALPPALETAR) the chain is Extracellular. A helical transmembrane segment spans residues 82–102 (ALMCVAVALSLIALLIGICGM). The Cytoplasmic portion of the chain corresponds to 103-124 (KQVQCTGSNERAKAYLLGTSGV). A helical membrane pass occupies residues 125-145 (LFILTGIFVLIPVSWTANIII). The Extracellular segment spans residues 146-164 (RDFYNPAIHIGQKRELGAA). The chain crosses the membrane as a helical span at residues 165-185 (LFLGWASAAVLFIGGGLLCGF). At 186 to 224 (CCCNRKKQGYRYPVPGYRVPHTDKRRNTTMLSKTSTSYV) the chain is on the cytoplasmic side.

It belongs to the claudin family. In terms of assembly, cannot form tight junction strands on its own. Interacts with OCLN. As to expression, in the kidney, expressed in the proximal tubule and in the Henle's loop. In the distal convoluted tubule, not expressed in all tubules. Not detected in the collecting duct (at protein level).

It localises to the cell junction. The protein resides in the tight junction. It is found in the basolateral cell membrane. It carries out the reaction chloride(in) = chloride(out). The catalysed reaction is hydrogencarbonate(in) = hydrogencarbonate(out). It catalyses the reaction bromide(in) = bromide(out). The enzyme catalyses iodide(out) = iodide(in). It carries out the reaction fluoride(in) = fluoride(out). The catalysed reaction is nitrate(in) = nitrate(out). It catalyses the reaction thiocyanate(in) = thiocyanate(out). Functionally, channel-forming tight junction protein with selectivity for anions, including chloride and hydrogencarbonate, and for solutes smaller than 9 Angstrom in diameter. In the kidney proximal tubule, may be involved in paracellular reabsorption of filtered anions. Does not affect water permeability. The polypeptide is Claudin-17 (CLDN17) (Homo sapiens (Human)).